Reading from the N-terminus, the 240-residue chain is Acyl-protein thioesterase 1 (240 aa).

Catalysis depends on charge relay system residues S129, D183, and H219.

The protein belongs to the AB hydrolase superfamily. AB hydrolase 2 family.

Its subcellular location is the cytoplasm. It is found in the nucleus. It catalyses the reaction S-hexadecanoyl-L-cysteinyl-[protein] + H2O = L-cysteinyl-[protein] + hexadecanoate + H(+). Hydrolyzes fatty acids from S-acylated cysteine residues in proteins with a strong preference for palmitoylated G-alpha proteins over other acyl substrates. Mediates the deacylation of G-alpha proteins such as GPA1 in vivo, but has weak or no activity toward palmitoylated Ras proteins. Has weak lysophospholipase activity in vitro; however such activity may not exist in vivo. The polypeptide is Acyl-protein thioesterase 1 (Mycosarcoma maydis (Corn smut fungus)).